Reading from the N-terminus, the 102-residue chain is NADH-quinone oxidoreductase subunit K 1 (102 aa).

3 consecutive transmembrane segments (helical) span residues 5–25, 30–50, and 62–82; these read LYEVLILASILFAMGLACVVA, VIMMLIGIEIMLNAVMLTFVG, and VFSLMIMALTSAEVSLALAMV.

This sequence belongs to the complex I subunit 4L family. In terms of assembly, NDH-1 is composed of 14 different subunits. Subunits NuoA, H, J, K, L, M, N constitute the membrane sector of the complex.

The protein resides in the cell inner membrane. The catalysed reaction is a quinone + NADH + 5 H(+)(in) = a quinol + NAD(+) + 4 H(+)(out). In terms of biological role, NDH-1 shuttles electrons from NADH, via FMN and iron-sulfur (Fe-S) centers, to quinones in the respiratory chain. The immediate electron acceptor for the enzyme in this species is believed to be ubiquinone. Couples the redox reaction to proton translocation (for every two electrons transferred, four hydrogen ions are translocated across the cytoplasmic membrane), and thus conserves the redox energy in a proton gradient. This Geobacter sp. (strain M21) protein is NADH-quinone oxidoreductase subunit K 1.